The sequence spans 215 residues: Cytidylate kinase (215 aa).

10–18 (GPAASGKGT) is an ATP binding site.

The protein belongs to the cytidylate kinase family. Type 1 subfamily.

It localises to the cytoplasm. It carries out the reaction CMP + ATP = CDP + ADP. The catalysed reaction is dCMP + ATP = dCDP + ADP. In Bartonella tribocorum (strain CIP 105476 / IBS 506), this protein is Cytidylate kinase.